The sequence spans 426 residues: Glutamyl-tRNA reductase (426 aa).

Residues 52–55 (TCNR), Ser-110, 115–117 (EYE), and Gln-121 contribute to the substrate site. The Nucleophile role is filled by Cys-53. 190 to 195 (GAGEMA) provides a ligand contact to NADP(+).

The protein belongs to the glutamyl-tRNA reductase family. As to quaternary structure, homodimer.

The catalysed reaction is (S)-4-amino-5-oxopentanoate + tRNA(Glu) + NADP(+) = L-glutamyl-tRNA(Glu) + NADPH + H(+). The protein operates within porphyrin-containing compound metabolism; protoporphyrin-IX biosynthesis; 5-aminolevulinate from L-glutamyl-tRNA(Glu): step 1/2. Its function is as follows. Catalyzes the NADPH-dependent reduction of glutamyl-tRNA(Glu) to glutamate 1-semialdehyde (GSA). This is Glutamyl-tRNA reductase from Saccharolobus solfataricus (strain ATCC 35092 / DSM 1617 / JCM 11322 / P2) (Sulfolobus solfataricus).